The chain runs to 389 residues: S-adenosylmethionine synthase (389 aa).

His-17 serves as a coordination point for ATP. Asp-19 is a binding site for Mg(2+). Residue Glu-45 participates in K(+) binding. Glu-58 and Gln-101 together coordinate L-methionine. The flexible loop stretch occupies residues 101–111; that stretch reads QSPDISQGVTE. Residues 168-170, 234-235, Asp-243, 249-250, Ala-266, and Lys-270 contribute to the ATP site; these read DSK, RF, and RK. Residue Asp-243 participates in L-methionine binding. Residue Lys-274 participates in L-methionine binding.

The protein belongs to the AdoMet synthase family. In terms of assembly, homotetramer; dimer of dimers. It depends on Mg(2+) as a cofactor. Requires K(+) as cofactor.

The protein resides in the cytoplasm. It carries out the reaction L-methionine + ATP + H2O = S-adenosyl-L-methionine + phosphate + diphosphate. It participates in amino-acid biosynthesis; S-adenosyl-L-methionine biosynthesis; S-adenosyl-L-methionine from L-methionine: step 1/1. Its function is as follows. Catalyzes the formation of S-adenosylmethionine (AdoMet) from methionine and ATP. The overall synthetic reaction is composed of two sequential steps, AdoMet formation and the subsequent tripolyphosphate hydrolysis which occurs prior to release of AdoMet from the enzyme. The sequence is that of S-adenosylmethionine synthase from Syntrophotalea carbinolica (strain DSM 2380 / NBRC 103641 / GraBd1) (Pelobacter carbinolicus).